A 309-amino-acid chain; its full sequence is Putative F-box protein At4g05475 (309 aa).

The disordered stretch occupies residues 1 to 26 (MATSTTLQSLLMKEDEEQRNKRRTTS). Residues 37–84 (RINWVDLPPELTTSILLRLSVTDILDNARKLCRAWRRICKDPSMWRKI) form the F-box domain.

This chain is Putative F-box protein At4g05475, found in Arabidopsis thaliana (Mouse-ear cress).